Here is a 106-residue protein sequence, read N- to C-terminus: Nucleoid-associated protein MCCL_1934 (106 aa).

The interval 1-34 (MRGGGNMQQMMKQMQKMQKKMAEEQEKLKEERIE) is disordered. Positions 7–16 (MQQMMKQMQK) are enriched in low complexity. Over residues 20–34 (KMAEEQEKLKEERIE) the composition is skewed to basic and acidic residues.

Belongs to the YbaB/EbfC family. Homodimer.

Its subcellular location is the cytoplasm. The protein resides in the nucleoid. Its function is as follows. Binds to DNA and alters its conformation. May be involved in regulation of gene expression, nucleoid organization and DNA protection. The chain is Nucleoid-associated protein MCCL_1934 from Macrococcus caseolyticus (strain JCSC5402) (Macrococcoides caseolyticum).